The chain runs to 372 residues: Peptide chain release factor 2 (372 aa).

Residue Gln253 is modified to N5-methylglutamine.

It belongs to the prokaryotic/mitochondrial release factor family. In terms of processing, methylated by PrmC. Methylation increases the termination efficiency of RF2.

It localises to the cytoplasm. Functionally, peptide chain release factor 2 directs the termination of translation in response to the peptide chain termination codons UGA and UAA. This is Peptide chain release factor 2 from Mycolicibacterium gilvum (strain PYR-GCK) (Mycobacterium gilvum (strain PYR-GCK)).